Consider the following 402-residue polypeptide: Putative PDZ domain-containing protein PDZK1P1 (402 aa).

2 PDZ domains span residues 12-93 and 121-206; these read RLCY…VDKE and IVEM…VDKE. Residues 230-258 are disordered; that stretch reads GSVKEAPAPTPTSLEVSSPPDTTEEEDHK. Positions 240-250 are enriched in polar residues; it reads PTSLEVSSPPD. The PDZ 3 domain occupies 261–341; that stretch reads LCRLAKGENG…NVTLLVCGKK (81 aa). The interval 362 to 402 is disordered; that stretch reads DTPPDSKEGIVVESKHDSHMAKERAHSTASHSSSNSEDTEM. Over residues 365-387 the composition is skewed to basic and acidic residues; that stretch reads PDSKEGIVVESKHDSHMAKERAH. Residues 388 to 402 show a composition bias toward low complexity; that stretch reads STASHSSSNSEDTEM.

This sequence belongs to the NHER family.

The polypeptide is Putative PDZ domain-containing protein PDZK1P1 (Homo sapiens (Human)).